Here is a 149-residue protein sequence, read N- to C-terminus: L-alanine exporter AlaE (149 aa).

The next 4 membrane-spanning stretches (helical) occupy residues F16 to M36, L46 to I66, A83 to A105, and S115 to C135.

It belongs to the AlaE exporter family.

Its subcellular location is the cell inner membrane. Functionally, exports L-alanine. In Salmonella typhimurium (strain LT2 / SGSC1412 / ATCC 700720), this protein is L-alanine exporter AlaE.